The primary structure comprises 449 residues: POU domain, class 5, transcription factor 1.1 (449 aa).

Disordered regions lie at residues 79 to 125 (ENNQ…SPPN) and 170 to 233 (YPTP…PSES). Over residues 97-110 (SRIKVKEEVVHETD) the composition is skewed to basic and acidic residues. A compositionally biased stretch (polar residues) spans 170-180 (YPTPANQSPNT). A compositionally biased stretch (low complexity) spans 187–199 (SSMESSRCSSTNS). A compositionally biased stretch (acidic residues) spans 224-233 (DNEEEVPSES). One can recognise a POU-specific domain in the interval 227 to 301 (EEVPSESEME…FLERWVVEAE (75 aa)). The homeobox DNA-binding region spans 321–380 (KRKRRTNIENIVKGTLESYFMKCPKPGAQEMVQIAKELNMDKDVVRVWFCNRRQKGKRQG).

This sequence belongs to the POU transcription factor family. Class-5 subfamily. In terms of assembly, interacts with components of the transcription complex that assembles on the vent2-B gene, including vent2 (via C-terminus), smad1 and smad4. Forms a repression complex on the promoters of the gsc and mix2 genes via interactions with the nodal/activin signaling pathway transducers foxh1/fast1, gtf2ird1/wbscr11 and smad2. Forms a repression complex on the promoters of the nodal/nr1 and siamois genes with the maternal factors tcf7l1/tcf3 and vegt. Highly enriched within the animal half of developing embryos within ectodermal and mesodermal regions. Expressed in the neuroectoderm at the early neurula stage, with expression initially extending to the future hindbrain/midbrain boundary, but later shifting toward the posterior pole where it persists within the tip of the tail in hatching embryos. Expressed at very low levels in the adult kidney.

It is found in the nucleus. In terms of biological role, transcription factor that binds to the octamer motif (5'-ATTTGCAT-3'). Activates transcription when directly bound to the octamer DNA sequence, but can form repression complexes with other proteins at the promoter site to inhibit transcription. Binds to the promoter of the vent2-B gene to activate transcription when in the presence of other BMP signaling factors also bound to the promoter. Inhibits the competence of ectodermal cells to respond to BMP during embryogenesis thereby inhibiting epidermal differentiation and promoting neural induction. Antagonizes the activity of nodal/activin signaling by forming a transcriptional repression complex on the gsc and mix2 gene promoters to inhibit their transcription, and thus maintain the undifferentiated state of embryonic cells to prevent them from differentiating prematurely. Acts maternally to inhibit vegt and beta-catenin-activated gene transcription by forming a transcriptional repression complex on the nodal/nr1 and siamois promoters to inhibit their transcription. The chain is POU domain, class 5, transcription factor 1.1 (pou5f1.1) from Xenopus laevis (African clawed frog).